The primary structure comprises 276 residues: Type II pantothenate kinase (276 aa).

8–15 (DAGGTLTK) is an ATP binding site. Catalysis depends on E76, which acts as the Proton acceptor. ATP-binding positions include T105, 127 to 131 (GGTIM), F143, and S230.

Belongs to the type II pantothenate kinase family. In terms of assembly, homodimer.

It localises to the cytoplasm. The enzyme catalyses (R)-pantothenate + ATP = (R)-4'-phosphopantothenate + ADP + H(+). It functions in the pathway cofactor biosynthesis; coenzyme A biosynthesis; CoA from (R)-pantothenate: step 1/5. Its function is as follows. Catalyzes the phosphorylation of pantothenate (Pan), the first step in CoA biosynthesis. This Bacillus anthracis protein is Type II pantothenate kinase.